A 444-amino-acid polypeptide reads, in one-letter code: ATP-dependent protease ATPase subunit HslU (444 aa).

ATP is bound by residues isoleucine 18, 60–65 (GVGKTE), aspartate 256, glutamate 322, and arginine 394.

It belongs to the ClpX chaperone family. HslU subfamily. A double ring-shaped homohexamer of HslV is capped on each side by a ring-shaped HslU homohexamer. The assembly of the HslU/HslV complex is dependent on binding of ATP.

The protein localises to the cytoplasm. Its function is as follows. ATPase subunit of a proteasome-like degradation complex; this subunit has chaperone activity. The binding of ATP and its subsequent hydrolysis by HslU are essential for unfolding of protein substrates subsequently hydrolyzed by HslV. HslU recognizes the N-terminal part of its protein substrates and unfolds these before they are guided to HslV for hydrolysis. The polypeptide is ATP-dependent protease ATPase subunit HslU (Klebsiella pneumoniae (strain 342)).